A 70-amino-acid polypeptide reads, in one-letter code: DNA gyrase inhibitor YacG (70 aa).

Zn(2+)-binding residues include C7, C10, C26, and C30.

Belongs to the DNA gyrase inhibitor YacG family. In terms of assembly, interacts with GyrB. It depends on Zn(2+) as a cofactor.

In terms of biological role, inhibits all the catalytic activities of DNA gyrase by preventing its interaction with DNA. Acts by binding directly to the C-terminal domain of GyrB, which probably disrupts DNA binding by the gyrase. This is DNA gyrase inhibitor YacG from Shewanella sediminis (strain HAW-EB3).